The sequence spans 140 residues: uncharacterized protein (140 aa).

The segment at 21–42 (CPYCNYTNADVKAIKKHIKSKH) adopts a C2H2-type zinc-finger fold.

The protein to M.jannaschii MJECL27.

This is an uncharacterized protein from Methanocaldococcus jannaschii (strain ATCC 43067 / DSM 2661 / JAL-1 / JCM 10045 / NBRC 100440) (Methanococcus jannaschii).